Here is a 669-residue protein sequence, read N- to C-terminus: DNA mismatch repair protein MutL (669 aa).

Over residues 356–371 (FEQRQNTENKQEKTFS) the composition is skewed to basic and acidic residues. Residues 356 to 379 (FEQRQNTENKQEKTFSSEESNSKP) form a disordered region.

The protein belongs to the DNA mismatch repair MutL/HexB family.

Its function is as follows. This protein is involved in the repair of mismatches in DNA. It is required for dam-dependent methyl-directed DNA mismatch repair. May act as a 'molecular matchmaker', a protein that promotes the formation of a stable complex between two or more DNA-binding proteins in an ATP-dependent manner without itself being part of a final effector complex. The chain is DNA mismatch repair protein MutL from Staphylococcus aureus (strain MRSA252).